The primary structure comprises 682 residues: DNA-directed RNA polymerase subunit beta' (682 aa).

Cys69, Cys71, Cys87, and Cys90 together coordinate Zn(2+). Asp489, Asp491, and Asp493 together coordinate Mg(2+).

This sequence belongs to the RNA polymerase beta' chain family. RpoC1 subfamily. As to quaternary structure, in plastids the minimal PEP RNA polymerase catalytic core is composed of four subunits: alpha, beta, beta', and beta''. When a (nuclear-encoded) sigma factor is associated with the core the holoenzyme is formed, which can initiate transcription. Mg(2+) serves as cofactor. Zn(2+) is required as a cofactor.

It localises to the plastid. It is found in the chloroplast. It carries out the reaction RNA(n) + a ribonucleoside 5'-triphosphate = RNA(n+1) + diphosphate. DNA-dependent RNA polymerase catalyzes the transcription of DNA into RNA using the four ribonucleoside triphosphates as substrates. This Hordeum vulgare (Barley) protein is DNA-directed RNA polymerase subunit beta'.